Reading from the N-terminus, the 575-residue chain is Alpha-(1,6)-fucosyltransferase (575 aa).

The Cytoplasmic portion of the chain corresponds to 1-9; sequence MRPWTGSWR. Residues 10-30 traverse the membrane as a helical; Signal-anchor for type II membrane protein segment; that stretch reads WIMLILFAWGTLLFYIGGHLV. The Lumenal portion of the chain corresponds to 31-575; the sequence is RDNDHPDHSS…KYPTYPEAEK (545 aa). Intrachain disulfides connect C204–C266, C212–C230, and C218–C222. The region spanning 206 to 493 is the GT23 domain; sequence KAKKLVCNIN…PDASANFHSL (288 aa). Position 278 is a phosphoserine (S278). The SH3-binding motif lies at 299–305; that stretch reads PRPPYLP. The tract at residues 365-366 is important for donor substrate binding; sequence RR. An intrachain disulfide couples C465 to C472. An SH3 domain is found at 502 to 563; sequence QNAHNQIAIY…PSYKVREKIE (62 aa).

The protein belongs to the glycosyltransferase 23 family. In terms of processing, tyrosine phosphorylated by PKDCC/VLK.

The protein resides in the golgi apparatus. The protein localises to the golgi stack membrane. It catalyses the reaction N(4)-{beta-D-GlcNAc-(1-&gt;2)-alpha-D-Man-(1-&gt;3)-[beta-D-GlcNAc-(1-&gt;2)-alpha-D-Man-(1-&gt;6)]-beta-D-Man-(1-&gt;4)-beta-D-GlcNAc-(1-&gt;4)-beta-D-GlcNAc}-L-asparaginyl-[protein] + GDP-beta-L-fucose = an N(4)-{beta-D-GlcNAc-(1-&gt;2)-alpha-D-Man-(1-&gt;3)-[beta-D-GlcNAc-(1-&gt;2)-alpha-D-Man-(1-&gt;6)]-beta-D-Man-(1-&gt;4)-beta-D-GlcNAc-(1-&gt;4)-[alpha-L-Fuc-(1-&gt;6)]-beta-D-GlcNAc}-L-asparaginyl-[protein] + GDP + H(+). The protein operates within protein modification; protein glycosylation. Catalyzes the addition of fucose in alpha 1-6 linkage to the first GlcNAc residue, next to the peptide chains in N-glycans. The polypeptide is Alpha-(1,6)-fucosyltransferase (FUT8) (Canis lupus familiaris (Dog)).